The sequence spans 617 residues: Melatonin-related receptor (617 aa).

Residues 1–30 are Extracellular-facing; the sequence is MGPTLAVPTPYGCIGCKLPQPEYPPALIIF. Residues 31-51 form a helical membrane-spanning segment; the sequence is MFCAMVITIVVDLIGNSMVIL. At 52–64 the chain is on the cytoplasmic side; sequence AVTKNKKLRNSGN. The helical transmembrane segment at 65–85 threads the bilayer; sequence IFVVSLSVADMLVAIYPYPLM. The Extracellular portion of the chain corresponds to 86-103; the sequence is LHAMSIGGWDLSQLQCQM. Cysteines 101 and 178 form a disulfide. Residues 104–124 traverse the membrane as a helical segment; that stretch reads VGFITGLSVVGSIFNIVAIAI. Residues 125–143 are Cytoplasmic-facing; sequence NRYCYICHSLQYERIFSVR. A helical transmembrane segment spans residues 144 to 164; it reads NTCIYLVITWIMTVLAVLPNM. Topologically, residues 165-188 are extracellular; sequence YIGTIEYDPRTYTCIFNYLNNPVF. A helical transmembrane segment spans residues 189–209; the sequence is TVTIVCIHFVLPLLIVGFCYV. Residues 210-239 lie on the Cytoplasmic side of the membrane; it reads RIWTKVLAARDPAGQNPDNQLAEVRNFLTM. The helical transmembrane segment at 240-260 threads the bilayer; that stretch reads FVIFLLFAVCWCPINVLTVLV. Residues 261 to 273 are Extracellular-facing; it reads AVSPKEMAGKIPN. A helical membrane pass occupies residues 274-294; that stretch reads WLYLAAYFIAYFNSCLNAVIY. The Cytoplasmic segment spans residues 295 to 617; that stretch reads GLLNENFRRE…VEDDPDEMAV (323 aa). Disordered regions lie at residues 340-438 and 464-596; these read AHAR…ATVY and SVHF…VTTS. Basic and acidic residues predominate over residues 341 to 353; that stretch reads HARDQAREQDRAH. Residues 485–500 are compositionally biased toward polar residues; that stretch reads GSHSKSAFSAATSHPK.

It belongs to the G-protein coupled receptor 1 family. Homodimer, and heterodimer with MTNR1A and MTNR1B. Interacts with KAT5. Interacts with RTN4 isoform A/NOGO-A. Interacts with TGFBR1. In terms of assembly, interacts with GTF2I. Post-translationally, cleaved by CAPN1 in a calcium-dependent manner. Hypothalamus and pituitary.

It localises to the cell membrane. It is found in the postsynaptic density. The protein resides in the nucleus. In terms of biological role, g protein-coupled receptor that plays a role in numerous physiological processes including regulation of energy metabolism, neurite outgrowth or cell migration. Promotes self-renewal and neuronal differentiation of neural progenitor cells through activation of the NOTCH and WNT/beta-catenin signaling pathways. Modulates the KAT5-dependent glucocorticoid receptor signaling by modulating KAT5 subcellular compartmentalisation. Also plays a role in the activation TGFBR1 in the absence of TGFBR2 by interfering with FKBP1A binding to TGFBR1, leading to induction of both canonical and non-canonical SMAD signaling pathways resulting in inhibition of proliferation or promotion of migration. Functionally, upon cleavage by CAPN1, functions as a scaffold in the nucleus for interacting partners such as GTF2I to promote FOS promoter activation. The sequence is that of Melatonin-related receptor (GPR50) from Homo sapiens (Human).